Consider the following 402-residue polypeptide: Putative F-box protein At4g22180 (402 aa).

The region spanning 18 to 64 (PNSWSELPLDLLTAVFERLSYANFQRAKSVCSSWHSGSRQSVPIQIP) is the F-box domain.

The sequence is that of Putative F-box protein At4g22180 from Arabidopsis thaliana (Mouse-ear cress).